A 391-amino-acid polypeptide reads, in one-letter code: Na(+)/H(+) antiporter NhaA 1 (391 aa).

The next 11 helical transmembrane spans lie at 19 to 39, 56 to 76, 98 to 118, 128 to 148, 157 to 177, 180 to 200, 208 to 228, 264 to 284, 297 to 317, 335 to 355, and 364 to 384; these read FLAS…AALI, VWLG…IFFL, ALPG…YIAI, GWAI…SLLG, VFLA…IAFF, SGLN…LIAL, LLPY…SGVH, VAFA…LSGI, VALG…VLAI, GVAI…NLAF, and EVKV…ILLL.

Belongs to the NhaA Na(+)/H(+) (TC 2.A.33) antiporter family.

It is found in the cell inner membrane. It carries out the reaction Na(+)(in) + 2 H(+)(out) = Na(+)(out) + 2 H(+)(in). Functionally, na(+)/H(+) antiporter that extrudes sodium in exchange for external protons. In Pseudomonas savastanoi pv. phaseolicola (strain 1448A / Race 6) (Pseudomonas syringae pv. phaseolicola (strain 1448A / Race 6)), this protein is Na(+)/H(+) antiporter NhaA 1.